Reading from the N-terminus, the 247-residue chain is Pyridoxine 5'-phosphate synthase (247 aa).

Position 9 (Asn-9) interacts with 3-amino-2-oxopropyl phosphate. 11-12 (DH) contacts 1-deoxy-D-xylulose 5-phosphate. Arg-20 serves as a coordination point for 3-amino-2-oxopropyl phosphate. His-45 (proton acceptor) is an active-site residue. 1-deoxy-D-xylulose 5-phosphate-binding residues include Arg-47 and His-52. The active-site Proton acceptor is the Glu-72. Thr-102 is a 1-deoxy-D-xylulose 5-phosphate binding site. The Proton donor role is filled by His-193. 3-amino-2-oxopropyl phosphate contacts are provided by residues Gly-194 and 215–216 (GH).

Belongs to the PNP synthase family. Homooctamer; tetramer of dimers.

It localises to the cytoplasm. It carries out the reaction 3-amino-2-oxopropyl phosphate + 1-deoxy-D-xylulose 5-phosphate = pyridoxine 5'-phosphate + phosphate + 2 H2O + H(+). It functions in the pathway cofactor biosynthesis; pyridoxine 5'-phosphate biosynthesis; pyridoxine 5'-phosphate from D-erythrose 4-phosphate: step 5/5. In terms of biological role, catalyzes the complicated ring closure reaction between the two acyclic compounds 1-deoxy-D-xylulose-5-phosphate (DXP) and 3-amino-2-oxopropyl phosphate (1-amino-acetone-3-phosphate or AAP) to form pyridoxine 5'-phosphate (PNP) and inorganic phosphate. In Blochmanniella floridana, this protein is Pyridoxine 5'-phosphate synthase.